The chain runs to 262 residues: Flap endonuclease Xni (262 aa).

D109 is a Mg(2+) binding site. In terms of domain architecture, 5'-3' exonuclease spans 165–255; the sequence is LKPEQLADYW…FNLQDIRYEK (91 aa). K(+)-binding residues include L176, A177, I187, and V190. The interaction with DNA stretch occupies residues 189-194; sequence GVGPKA.

This sequence belongs to the Xni family. Mg(2+) is required as a cofactor. The cofactor is K(+).

Has flap endonuclease activity. During DNA replication, flap endonucleases cleave the 5'-overhanging flap structure that is generated by displacement synthesis when DNA polymerase encounters the 5'-end of a downstream Okazaki fragment. This chain is Flap endonuclease Xni, found in Aliivibrio fischeri (strain MJ11) (Vibrio fischeri).